Consider the following 450-residue polypeptide: tRNA modification GTPase MnmE (450 aa).

Residues Arg-23, Glu-80, and Arg-123 each contribute to the (6S)-5-formyl-5,6,7,8-tetrahydrofolate site. In terms of domain architecture, TrmE-type G spans 219-372 (GLHVVLAGKP…LRQRLLQLAG (154 aa)). Asn-229 serves as a coordination point for K(+). Residues 229-234 (NVGKSS), 248-254 (TPIAGTT), 273-276 (DTAG), and 353-355 (SAR) contribute to the GTP site. Ser-233 contacts Mg(2+). The K(+) site is built by Thr-248, Ile-250, and Thr-253. Thr-254 lines the Mg(2+) pocket. Lys-450 is a binding site for (6S)-5-formyl-5,6,7,8-tetrahydrofolate.

Belongs to the TRAFAC class TrmE-Era-EngA-EngB-Septin-like GTPase superfamily. TrmE GTPase family. Homodimer. Heterotetramer of two MnmE and two MnmG subunits. Requires K(+) as cofactor.

The protein localises to the cytoplasm. Functionally, exhibits a very high intrinsic GTPase hydrolysis rate. Involved in the addition of a carboxymethylaminomethyl (cmnm) group at the wobble position (U34) of certain tRNAs, forming tRNA-cmnm(5)s(2)U34. The sequence is that of tRNA modification GTPase MnmE from Bordetella bronchiseptica (strain ATCC BAA-588 / NCTC 13252 / RB50) (Alcaligenes bronchisepticus).